Consider the following 62-residue polypeptide: Photosystem II reaction center protein Z (62 aa).

2 helical membrane-spanning segments follow: residues A8–A28 and F41–I61.

This sequence belongs to the PsbZ family. As to quaternary structure, PSII is composed of 1 copy each of membrane proteins PsbA, PsbB, PsbC, PsbD, PsbE, PsbF, PsbH, PsbI, PsbJ, PsbK, PsbL, PsbM, PsbT, PsbY, PsbZ, Psb30/Ycf12, at least 3 peripheral proteins of the oxygen-evolving complex and a large number of cofactors. It forms dimeric complexes.

The protein resides in the plastid. The protein localises to the chloroplast thylakoid membrane. Functionally, may control the interaction of photosystem II (PSII) cores with the light-harvesting antenna, regulates electron flow through the 2 photosystem reaction centers. PSII is a light-driven water plastoquinone oxidoreductase, using light energy to abstract electrons from H(2)O, generating a proton gradient subsequently used for ATP formation. The polypeptide is Photosystem II reaction center protein Z (Coffea arabica (Arabian coffee)).